Here is a 352-residue protein sequence, read N- to C-terminus: MNGTEGPDFYIPFSNKTGVVRSPFEYPQYYLAEPWKYSALAAYMFMLIILGFPINFLTLYVTVQHKKLRSPLNYILLNLAVADLFMVLGGFTTTLYTSMNGYFVFGVTGCYFEGFFATLGGEVALWCLVVLAIERYIVVCKPMSNFRFGENHAIMGVVFTWIMALTCAAPPLVGWSRYIPEGMQCSCGVDYYTLKPEVNNESFVIYMFVVHFAIPLAVIFFCYGRLVCTVKEAAAQQQESATTQKAEKEVTRMVIIMVVSFLICWVPYASVAFYIFSNQGSDFGPVFMTIPAFFAKSSAIYNPVIYIVMNKQFRNCMITTLCCGKNPLGDDETATGSKTETSSVSTSQVSPA.

Topologically, residues 1-36 (MNGTEGPDFYIPFSNKTGVVRSPFEYPQYYLAEPWK) are extracellular. N-linked (GlcNAc...) asparagine glycans are attached at residues Asn2 and Asn15. A helical membrane pass occupies residues 37–61 (YSALAAYMFMLIILGFPINFLTLYV). Topologically, residues 62–73 (TVQHKKLRSPLN) are cytoplasmic. A helical membrane pass occupies residues 74–96 (YILLNLAVADLFMVLGGFTTTLY). At 97 to 110 (TSMNGYFVFGVTGC) the chain is on the extracellular side. Cys110 and Cys187 form a disulfide bridge. A helical transmembrane segment spans residues 111 to 133 (YFEGFFATLGGEVALWCLVVLAI). Positions 134–136 (ERY) match the 'Ionic lock' involved in activated form stabilization motif. Residues 134–152 (ERYIVVCKPMSNFRFGENH) lie on the Cytoplasmic side of the membrane. Residues 153–173 (AIMGVVFTWIMALTCAAPPLV) form a helical membrane-spanning segment. The Extracellular portion of the chain corresponds to 174-202 (GWSRYIPEGMQCSCGVDYYTLKPEVNNES). A helical membrane pass occupies residues 203-224 (FVIYMFVVHFAIPLAVIFFCYG). Residues 225-252 (RLVCTVKEAAAQQQESATTQKAEKEVTR) lie on the Cytoplasmic side of the membrane. Residues 253 to 274 (MVIIMVVSFLICWVPYASVAFY) form a helical membrane-spanning segment. At 275–286 (IFSNQGSDFGPV) the chain is on the extracellular side. The chain crosses the membrane as a helical span at residues 287-308 (FMTIPAFFAKSSAIYNPVIYIV). Lys296 bears the N6-(retinylidene)lysine mark. Residues 309–352 (MNKQFRNCMITTLCCGKNPLGDDETATGSKTETSSVSTSQVSPA) lie on the Cytoplasmic side of the membrane. 2 S-palmitoyl cysteine lipidation sites follow: Cys322 and Cys323. A disordered region spans residues 332–352 (ETATGSKTETSSVSTSQVSPA). The span at 335-352 (TGSKTETSSVSTSQVSPA) shows a compositional bias: low complexity.

Belongs to the G-protein coupled receptor 1 family. Opsin subfamily. In terms of processing, contains one covalently linked retinal chromophore. Upon light absorption, the covalently bound 11-cis-retinal is converted to all-trans-retinal. After hydrolysis of the Schiff base and release of the covalently bound all-trans-retinal, active rhodopsin is regenerated by binding of a fresh molecule of 11-cis-retinal. As to expression, expressed in rod-shaped photoreceptor cells in the retina that mediate vision in dim ligh (at protein level).

It is found in the membrane. The protein localises to the cell projection. The protein resides in the cilium. Its subcellular location is the photoreceptor outer segment. In terms of biological role, photoreceptor required for image-forming vision at low light intensity. Required for photoreceptor cell viability after birth. Light-induced isomerization of 11-cis to all-trans retinal triggers a conformational change that activates signaling via G-proteins. Subsequent receptor phosphorylation mediates displacement of the bound G-protein alpha subunit by arrestin and terminates signaling. This is Rhodopsin (RHO) from Alligator mississippiensis (American alligator).